The following is a 671-amino-acid chain: DNA ligase (671 aa).

NAD(+)-binding positions include 32–36 (DVEYD), 81–82 (SL), and Glu-114. The active-site N6-AMP-lysine intermediate is the Lys-116. NAD(+) is bound by residues Arg-137, Glu-175, Lys-292, and Lys-316. Cys-410, Cys-413, Cys-428, and Cys-434 together coordinate Zn(2+). The 80-residue stretch at 592–671 (EKNNYFSGKN…AEFYQILGIR (80 aa)) folds into the BRCT domain.

It belongs to the NAD-dependent DNA ligase family. LigA subfamily. Mg(2+) serves as cofactor. Mn(2+) is required as a cofactor.

It catalyses the reaction NAD(+) + (deoxyribonucleotide)n-3'-hydroxyl + 5'-phospho-(deoxyribonucleotide)m = (deoxyribonucleotide)n+m + AMP + beta-nicotinamide D-nucleotide.. In terms of biological role, DNA ligase that catalyzes the formation of phosphodiester linkages between 5'-phosphoryl and 3'-hydroxyl groups in double-stranded DNA using NAD as a coenzyme and as the energy source for the reaction. It is essential for DNA replication and repair of damaged DNA. This chain is DNA ligase, found in Baumannia cicadellinicola subsp. Homalodisca coagulata.